The following is a 383-amino-acid chain: Chitinase-3-like protein 1 (383 aa).

Residues 1 to 21 form the signal peptide; that stretch reads MGLRASGTGFVVLVLLQSCAA. One can recognise a GH18 domain in the interval 22–383; that stretch reads YKLICYYTSW…SAVKDVLAEV (362 aa). Cysteines 26 and 51 form a disulfide. The N-linked (GlcNAc...) asparagine glycan is linked to Asn60. Residues 70 to 71, 97 to 100, Tyr141, 204 to 207, and Arg263 each bind chitin; these read EW, GGWN, and LTYD. A disulfide bond links Cys300 and Cys364. Residues 324-338 are important for AKT1 activation and IL8 production; the sequence is QWVAYDDQESVKNKA. Trp352 is a chitin binding site. A glycan (N-linked (GlcNAc...) asparagine) is linked at Asn367.

It belongs to the glycosyl hydrolase 18 family. In terms of assembly, monomer.

The protein resides in the secreted. It is found in the extracellular space. The protein localises to the cytoplasm. It localises to the perinuclear region. Its subcellular location is the endoplasmic reticulum. Functionally, carbohydrate-binding lectin with a preference for chitin. Has no chitinase activity. May play a role in tissue remodeling and in the capacity of cells to respond to and cope with changes in their environment. Plays a role in T-helper cell type 2 (Th2) inflammatory response and IL-13-induced inflammation, regulating allergen sensitization, inflammatory cell apoptosis, dendritic cell accumulation and M2 macrophage differentiation. Facilitates invasion of pathogenic enteric bacteria into colonic mucosa and lymphoid organs. Mediates activation of AKT1 signaling pathway and subsequent IL8 production in colonic epithelial cells. Regulates antibacterial responses in lung by contributing to macrophage bacterial killing, controlling bacterial dissemination and augmenting host tolerance. Also regulates hyperoxia-induced injury, inflammation and epithelial apoptosis in lung. The chain is Chitinase-3-like protein 1 (CHI3L1) from Capra hircus (Goat).